A 575-amino-acid chain; its full sequence is DNA polymerase lambda (575 aa).

Positions 36-132 constitute a BRCT domain; sequence EAEEWLSSLR…RLVDVAGFSI (97 aa). Positions 160 to 205 are disordered; it reads ALLQTALPPPPSPTRPVSPPQKTKEAPNTQAQPISDDEASDGEETQ. The span at 166–178 shows a compositional bias: pro residues; the sequence is LPPPPSPTRPVSP. The span at 194-203 shows a compositional bias: acidic residues; that stretch reads SDDEASDGEE. The segment at 265 to 279 is DNA-binding; it reads KAYSVQGDKWRALGY. Catalysis depends on Lys-312, which acts as the Schiff-base intermediate with DNA. The segment at 345 to 348 is DNA-binding; it reads GTKT. DCTP contacts are provided by residues Arg-386, 417 to 420, and 426 to 429; these read SYRR and GDVD. The interval 420–429 is involved in primer binding; the sequence is RGKATCGDVD. The Mn(2+) site is built by Asp-427, Asp-429, and Asp-490. Residues 466-505 form a DNA-binding region; that stretch reads ENGQQQKYLGVCRLPGPGWRHRRLDIIVVPYSEFACALLY. Position 513 (Asn-513) interacts with dCTP.

Belongs to the DNA polymerase type-X family. As to quaternary structure, interacts with PCNA. Interacts with PAXX; promoting POLL recruitment to double-strand breaks (DSBs) and stimulation of the end-filling activity of POLL. Interacts with XRCC4; promoting POLL recruitment to double-strand breaks (DSBs) and stimulation of the end-filling activity of POLL. Interacts with NHEJ1/XLF; promoting POLL recruitment to double-strand breaks (DSBs) and stimulation of the end-filling activity of POLL. It depends on Mn(2+) as a cofactor.

Its subcellular location is the nucleus. It catalyses the reaction DNA(n) + a 2'-deoxyribonucleoside 5'-triphosphate = DNA(n+1) + diphosphate. Its function is as follows. DNA polymerase that functions in several pathways of DNA repair. Involved in base excision repair (BER) responsible for repair of lesions that give rise to abasic (AP) sites in DNA. Also contributes to DNA double-strand break repair by non-homologous end joining and homologous recombination. Has both template-dependent and template-independent (terminal transferase) DNA polymerase activities. Also has a 5'-deoxyribose-5-phosphate lyase (dRP lyase) activity. This Macaca fascicularis (Crab-eating macaque) protein is DNA polymerase lambda.